The primary structure comprises 626 residues: Chaperone protein HtpG (626 aa).

The interval 1 to 329 (MSEETLSFQA…SSDLPLNVSR (329 aa)) is a; substrate-binding. A b region spans residues 330 to 549 (EMLQDDPRLR…EGAMSLHLQK (220 aa)). Residues 550 to 626 (LLRQANQGSE…LTEVMGKGLI (77 aa)) form a c region.

It belongs to the heat shock protein 90 family. In terms of assembly, homodimer.

It is found in the cytoplasm. Molecular chaperone. Has ATPase activity. In Rhodospirillum rubrum (strain ATCC 11170 / ATH 1.1.1 / DSM 467 / LMG 4362 / NCIMB 8255 / S1), this protein is Chaperone protein HtpG.